Consider the following 89-residue polypeptide: Small ribosomal subunit protein uS15 (89 aa).

The protein belongs to the universal ribosomal protein uS15 family. In terms of assembly, part of the 30S ribosomal subunit. Forms a bridge to the 50S subunit in the 70S ribosome, contacting the 23S rRNA.

Functionally, one of the primary rRNA binding proteins, it binds directly to 16S rRNA where it helps nucleate assembly of the platform of the 30S subunit by binding and bridging several RNA helices of the 16S rRNA. Forms an intersubunit bridge (bridge B4) with the 23S rRNA of the 50S subunit in the ribosome. This chain is Small ribosomal subunit protein uS15, found in Bordetella parapertussis (strain 12822 / ATCC BAA-587 / NCTC 13253).